We begin with the raw amino-acid sequence, 148 residues long: MSDWDTVTKIGSRAGPGARTHVAKTQSQINSARRAGAIVGTEKKYATGNKSQDPAGQHLTKIDRENEVKPPSTTGRSVAQAIQKGRQAKGWAQKDLSQRINEKPQVVNDYESGRAIPNQQVLSKMERALGIKLRGQNIGAPLGGPKKK.

Residues 1–97 (MSDWDTVTKI…AKGWAQKDLS (97 aa)) form a disordered region. Positions 82-136 (IQKGRQAKGWAQKDLSQRINEKPQVVNDYESGRAIPNQQVLSKMERALGIKLRGQ) constitute an HTH cro/C1-type domain. A DNA-binding region (H-T-H motif) is located at residues 93 to 112 (QKDLSQRINEKPQVVNDYES).

It belongs to the MBF1 family.

In terms of biological role, transcriptional coactivator that stimulates GCN4-dependent transcriptional activity by bridging the DNA-binding region of GCN4 and TBP (SPT15), thereby recruiting TBP to GCN4-bound promoters. Involved in induction of the ribosome quality control (RQC) pathway; a pathway that degrades nascent peptide chains during problematic translation. Required to prevent stalled ribosomes from frameshifting. This chain is Multiprotein-bridging factor 1 (mbf1), found in Schizosaccharomyces pombe (strain 972 / ATCC 24843) (Fission yeast).